A 280-amino-acid chain; its full sequence is Inner kinetochore subunit fta1 (280 aa).

This sequence belongs to the CENP-L/IML3 family. In terms of assembly, component of the inner kinetochore constitutive centromere-associated network (CCAN) (also known as central kinetochore Sim4 complex in fission yeast), which is composed of at least cnl2, cnp3, cnp20, fta1, fta2, fta3, fta4, fta6, fta7, mal2, mhf1, mhf2, mis6, mis15, mis17, sim4 and wip1.

The protein localises to the nucleus. Its subcellular location is the chromosome. The protein resides in the centromere. It localises to the kinetochore. Component of the kinetochore, a multiprotein complex that assembles on centromeric DNA and attaches chromosomes to spindle microtubules, mediating chromosome segregation and sister chromatid segregation during meiosis and mitosis. Component of the inner kinetochore constitutive centromere-associated network (CCAN), which serves as a structural platform for outer kinetochore assembly. In Schizosaccharomyces pombe (strain 972 / ATCC 24843) (Fission yeast), this protein is Inner kinetochore subunit fta1 (fta1).